The primary structure comprises 142 residues: Mitochondrial import receptor subunit TOM22 homolog (142 aa).

A compositionally biased stretch (low complexity) spans 1–18 (MAAAVAAAGAGEPLSPEE). Residues 1 to 41 (MAAAVAAAGAGEPLSPEELLPKAEAEKAEEELEEDDDDELD) form a disordered region. Position 2 is an N-acetylalanine (alanine 2). Topologically, residues 2–83 (AAAVAAAGAG…AQKMYRFSRA (82 aa)) are cytoplasmic. Serine 15 is modified (phosphoserine). Positions 27-41 (KAEEELEEDDDDELD) are enriched in acidic residues. The segment at 41 to 50 (DETLSERLWG) is import sequence; necessary for mitochondrion outer membrane localization and integration in the TOM complex. Residue threonine 43 is modified to Phosphothreonine. Serine 45 carries the phosphoserine modification. The segment at 83 to 103 (AALWIGTTSFMILVLPVVFET) is TMD; necessary for mitochondrion outer membrane localization and integration in the TOM complex. The chain crosses the membrane as a helical span at residues 84–103 (ALWIGTTSFMILVLPVVFET). At 104–142 (EKLQMEQQQQLQQRQILLGPNTGLSGGMPGALPPLPGKM) the chain is on the mitochondrial intermembrane side. The interval 123-142 (PNTGLSGGMPGALPPLPGKM) is C-tail signal; necessary for mitochondrion outer membrane localization and integration in the TOM complex.

Belongs to the Tom22 family. In terms of assembly, forms part of the preprotein translocase complex of the outer mitochondrial membrane (TOM complex) which consists of at least 7 different proteins (TOMM5, TOMM6, TOMM7, TOMM20, TOMM22, TOMM40 and TOMM70). Interacts with PPP2R2B and TOMM40.

It localises to the mitochondrion outer membrane. In terms of biological role, central receptor component of the translocase of the outer membrane of mitochondria (TOM complex) responsible for the recognition and translocation of cytosolically synthesized mitochondrial preproteins. Together with the peripheral receptor TOM20 functions as the transit peptide receptor and facilitates the movement of preproteins into the translocation pore. Required for the translocation across the mitochondrial outer membrane of cytochrome P450 monooxygenases. In Mus musculus (Mouse), this protein is Mitochondrial import receptor subunit TOM22 homolog (Tomm22).